A 275-amino-acid polypeptide reads, in one-letter code: Bis(5'-nucleosyl)-tetraphosphatase, symmetrical (275 aa).

Belongs to the Ap4A hydrolase family.

The enzyme catalyses P(1),P(4)-bis(5'-adenosyl) tetraphosphate + H2O = 2 ADP + 2 H(+). Functionally, hydrolyzes diadenosine 5',5'''-P1,P4-tetraphosphate to yield ADP. The chain is Bis(5'-nucleosyl)-tetraphosphatase, symmetrical from Haemophilus influenzae (strain PittEE).